Consider the following 260-residue polypeptide: Protein SVS1 (260 aa).

A signal peptide spans 1 to 19 (MIFKILCSLLLVTSNFASA). 3 N-linked (GlcNAc...) asparagine glycosylation sites follow: Asn-23, Asn-249, and Asn-256.

Its function is as follows. Required for vanadate resistance. This chain is Protein SVS1 (SVS1), found in Saccharomyces cerevisiae (strain ATCC 204508 / S288c) (Baker's yeast).